Consider the following 303-residue polypeptide: Phosphoglycerate mutase 3 (303 aa).

Residues Arg-13–Asn-20, Cys-26–Gly-27, Arg-70, Glu-120–Tyr-123, Lys-131, and Arg-147–Arg-148 each bind substrate. Residue His-14 is the Tele-phosphohistidine intermediate of the active site. The Proton donor/acceptor role is filled by Glu-120. Residues Asn-168–Pro-198 are disordered. Positions Asp-177–Pro-198 are enriched in basic and acidic residues. Position 236-237 (Gly-236–Ser-237) interacts with substrate.

This sequence belongs to the phosphoglycerate mutase family. BPG-dependent PGAM subfamily.

The enzyme catalyses (2R)-2-phosphoglycerate = (2R)-3-phosphoglycerate. The protein operates within carbohydrate degradation; glycolysis; pyruvate from D-glyceraldehyde 3-phosphate: step 3/5. Functionally, could be non-functional. This is Phosphoglycerate mutase 3 (GPM3) from Saccharomyces cerevisiae (strain ATCC 204508 / S288c) (Baker's yeast).